A 159-amino-acid chain; its full sequence is Urease accessory protein UreE (159 aa).

Positions 140-159 are disordered; that stretch reads GAYHGTGHHHHGHGHDPHHG.

It belongs to the UreE family.

The protein localises to the cytoplasm. Functionally, involved in urease metallocenter assembly. Binds nickel. Probably functions as a nickel donor during metallocenter assembly. This is Urease accessory protein UreE from Sinorhizobium fredii (strain NBRC 101917 / NGR234).